The following is a 447-amino-acid chain: GTPase Der (447 aa).

2 EngA-type G domains span residues 4–165 (KIIT…PEEE) and 180–357 (LQIV…KIWN). GTP is bound by residues 10–17 (GRPNVGKS), 57–61 (DTPGL), 119–122 (NKCE), 186–193 (GRPNAGKS), 233–237 (DTAGL), and 298–301 (NKWD). In terms of domain architecture, KH-like spans 358-443 (KKITTSKLNE…PIRFTYVKTK (86 aa)).

Belongs to the TRAFAC class TrmE-Era-EngA-EngB-Septin-like GTPase superfamily. EngA (Der) GTPase family. As to quaternary structure, associates with the 50S ribosomal subunit.

Its function is as follows. GTPase that plays an essential role in the late steps of ribosome biogenesis. The polypeptide is GTPase Der (Rickettsia felis (strain ATCC VR-1525 / URRWXCal2) (Rickettsia azadi)).